Consider the following 344-residue polypeptide: Arginine N-succinyltransferase (344 aa).

Leucine 125 serves as a coordination point for succinyl-CoA. Histidine 229 acts as the Proton donor in catalysis.

This sequence belongs to the arginine N-succinyltransferase family.

The enzyme catalyses succinyl-CoA + L-arginine = N(2)-succinyl-L-arginine + CoA + H(+). Its pathway is amino-acid degradation; L-arginine degradation via AST pathway; L-glutamate and succinate from L-arginine: step 1/5. In terms of biological role, catalyzes the transfer of succinyl-CoA to arginine to produce N(2)-succinylarginine. In Shigella flexneri, this protein is Arginine N-succinyltransferase.